The chain runs to 263 residues: 3-methyl-2-oxobutanoate hydroxymethyltransferase (263 aa).

Residues Asp43 and Asp82 each contribute to the Mg(2+) site. Residues 43 to 44, Asp82, and Lys111 contribute to the 3-methyl-2-oxobutanoate site; that span reads DS. Position 113 (Glu113) interacts with Mg(2+). Glu179 acts as the Proton acceptor in catalysis.

This sequence belongs to the PanB family. As to quaternary structure, homodecamer; pentamer of dimers. Mg(2+) serves as cofactor.

Its subcellular location is the cytoplasm. It catalyses the reaction 3-methyl-2-oxobutanoate + (6R)-5,10-methylene-5,6,7,8-tetrahydrofolate + H2O = 2-dehydropantoate + (6S)-5,6,7,8-tetrahydrofolate. It functions in the pathway cofactor biosynthesis; (R)-pantothenate biosynthesis; (R)-pantoate from 3-methyl-2-oxobutanoate: step 1/2. Functionally, catalyzes the reversible reaction in which hydroxymethyl group from 5,10-methylenetetrahydrofolate is transferred onto alpha-ketoisovalerate to form ketopantoate. This chain is 3-methyl-2-oxobutanoate hydroxymethyltransferase, found in Neisseria meningitidis serogroup A / serotype 4A (strain DSM 15465 / Z2491).